Reading from the N-terminus, the 227-residue chain is Cytochrome c oxidase subunit 2 (227 aa).

The Mitochondrial intermembrane segment spans residues 1-14; that stretch reads MAYPMQLGLQDATS. The chain crosses the membrane as a helical span at residues 15 to 45; it reads PIMEELMNFHDHTLMIVFLISSLVLYLISLM. The Mitochondrial matrix segment spans residues 46–59; sequence LTTKLIHTNTMDAQ. The helical transmembrane segment at 60–87 threads the bilayer; it reads EVETIWTILPAIILVLIALPSLRILYMM. Residues 88 to 227 are Mitochondrial intermembrane-facing; that stretch reads DEINNPVLTV…FFENWSSSMT (140 aa). Residues H161, C196, E198, C200, H204, and M207 each coordinate Cu cation. Mg(2+) is bound at residue E198.

The protein belongs to the cytochrome c oxidase subunit 2 family. In terms of assembly, component of the cytochrome c oxidase (complex IV, CIV), a multisubunit enzyme composed of 14 subunits. The complex is composed of a catalytic core of 3 subunits MT-CO1, MT-CO2 and MT-CO3, encoded in the mitochondrial DNA, and 11 supernumerary subunits COX4I, COX5A, COX5B, COX6A, COX6B, COX6C, COX7A, COX7B, COX7C, COX8 and NDUFA4, which are encoded in the nuclear genome. The complex exists as a monomer or a dimer and forms supercomplexes (SCs) in the inner mitochondrial membrane with NADH-ubiquinone oxidoreductase (complex I, CI) and ubiquinol-cytochrome c oxidoreductase (cytochrome b-c1 complex, complex III, CIII), resulting in different assemblies (supercomplex SCI(1)III(2)IV(1) and megacomplex MCI(2)III(2)IV(2)). Found in a complex with TMEM177, COA6, COX18, COX20, SCO1 and SCO2. Interacts with TMEM177 in a COX20-dependent manner. Interacts with COX20. Interacts with COX16. Cu cation is required as a cofactor.

The protein localises to the mitochondrion inner membrane. The enzyme catalyses 4 Fe(II)-[cytochrome c] + O2 + 8 H(+)(in) = 4 Fe(III)-[cytochrome c] + 2 H2O + 4 H(+)(out). Component of the cytochrome c oxidase, the last enzyme in the mitochondrial electron transport chain which drives oxidative phosphorylation. The respiratory chain contains 3 multisubunit complexes succinate dehydrogenase (complex II, CII), ubiquinol-cytochrome c oxidoreductase (cytochrome b-c1 complex, complex III, CIII) and cytochrome c oxidase (complex IV, CIV), that cooperate to transfer electrons derived from NADH and succinate to molecular oxygen, creating an electrochemical gradient over the inner membrane that drives transmembrane transport and the ATP synthase. Cytochrome c oxidase is the component of the respiratory chain that catalyzes the reduction of oxygen to water. Electrons originating from reduced cytochrome c in the intermembrane space (IMS) are transferred via the dinuclear copper A center (CU(A)) of subunit 2 and heme A of subunit 1 to the active site in subunit 1, a binuclear center (BNC) formed by heme A3 and copper B (CU(B)). The BNC reduces molecular oxygen to 2 water molecules using 4 electrons from cytochrome c in the IMS and 4 protons from the mitochondrial matrix. The sequence is that of Cytochrome c oxidase subunit 2 (MT-CO2) from Desmodillus auricularis (Cape short-eared gerbil).